We begin with the raw amino-acid sequence, 575 residues long: Beta-amylase (575 aa).

Residues 1-36 form the signal peptide; sequence MLHSQKRIWKKIGLCLLSFILGITVFTGSFGSKAEA. D77 lines the substrate pocket. Residues E84 and D88 each coordinate Ca(2+). Residues H117 and D125 each contribute to the substrate site. C119 and C127 are disulfide-bonded. E171 lines the Ca(2+) pocket. Catalysis depends on E199, which acts as the Proton donor. Substrate contacts are provided by K315, H320, and T358. E395 serves as the catalytic Proton acceptor. Residues 396-397 and R424 each bind substrate; that span reads NA.

Belongs to the glycosyl hydrolase 14 family. As to quaternary structure, monomer. Requires Ca(2+) as cofactor.

It carries out the reaction Hydrolysis of (1-&gt;4)-alpha-D-glucosidic linkages in polysaccharides so as to remove successive maltose units from the non-reducing ends of the chains.. This is Beta-amylase from Niallia circulans (Bacillus circulans).